The chain runs to 555 residues: Acetyl-coenzyme A thioesterase (555 aa).

The region spanning 5–117 (APGEVVMSQA…FSTFVAKPVG (113 aa)) is the HotDog ACOT-type 1 domain. N6-succinyllysine is present on Lys33. CoA is bound by residues 53–55 (TAS), 82–84 (STS), and Arg144. N6-succinyllysine occurs at positions 159 and 228. The HotDog ACOT-type 2 domain occupies 179–294 (RGTSVQSIEL…FLIYNAADDK (116 aa)). 234 to 236 (KFR) is a CoA binding site. The region spanning 340-549 (CIHWDISKQA…IQFLENPPDD (210 aa)) is the START domain.

Homodimer or homotetramer.

The protein resides in the cytoplasm. Its subcellular location is the cytosol. It catalyses the reaction acetyl-CoA + H2O = acetate + CoA + H(+). It carries out the reaction butanoyl-CoA + H2O = butanoate + CoA + H(+). The catalysed reaction is hexanoyl-CoA + H2O = hexanoate + CoA + H(+). It functions in the pathway lipid metabolism; fatty acid metabolism. Its activity is regulated as follows. Inhibited by ADP. Active in the presence of ATP. Cold labile, it dissociates into inactive monomers at low temperature. In terms of biological role, catalyzes the hydrolysis of acyl-CoAs into free fatty acids and coenzyme A (CoASH), regulating their respective intracellular levels. Preferentially hydrolyzes acetyl-CoA. The polypeptide is Acetyl-coenzyme A thioesterase (ACOT12) (Homo sapiens (Human)).